The primary structure comprises 424 residues: Lipoamide acyltransferase component of branched-chain alpha-keto acid dehydrogenase complex (424 aa).

The Lipoyl-binding domain occupies 3-78 (IEQMTMPQLG…QVGEMICKIE (76 aa)). Position 44 is an N6-lipoyllysine (Lys-44). Residues 82-115 (ANPAEQKQEQPAASEAAENPVAKSAGAADQPNKK) are disordered. One can recognise a Peripheral subunit-binding (PSBD) domain in the interval 116-153 (RYSPAVLRLAGEHGIDLDQVTGTGAGGRITRKDIQRLI). The segment at 154 to 193 (ETGGVQEQNPEELKTAAPAPKSASKPEPKEETSYPASAAG) is disordered. Residues His-395 and Asp-399 contribute to the active site.

This sequence belongs to the 2-oxoacid dehydrogenase family. In terms of assembly, forms a 24-polypeptide structural core with octahedral symmetry. The cofactor is (R)-lipoate.

It catalyses the reaction N(6)-[(R)-dihydrolipoyl]-L-lysyl-[protein] + 2-methylpropanoyl-CoA = N(6)-[(R)-S(8)-2-methylpropanoyldihydrolipoyl]-L-lysyl-[protein] + CoA. Its function is as follows. The branched-chain alpha-keto dehydrogenase complex catalyzes the overall conversion of alpha-keto acids to acyl-CoA and CO(2). It contains multiple copies of three enzymatic components: branched-chain alpha-keto acid decarboxylase (E1), lipoamide acyltransferase (E2) and lipoamide dehydrogenase (E3). This Bacillus subtilis (strain 168) protein is Lipoamide acyltransferase component of branched-chain alpha-keto acid dehydrogenase complex (bfmBB).